The primary structure comprises 837 residues: MSQTGSHPGRGLAGRWLWGAQPCLLLPIVPLSWLVWLLLLLLASLLPSARLASPLPREEEIVFPEKLNGSVLPGSGAPARLLCRLQAFGETLLLELEQDSGVQVEGLTVQYLGQAPELLGGAEPGTYLTGTINGDPESVASLHWDGGALLGVLQYRGAELHLQPLEGGTPNSAGGPGAHILRRKSPASGQGPMCNVKAPLGSPSPRPRRAKRFASLSRFVETLVVADDKMAAFHGAGLKRYLLTVMAAAAKAFKHPSIRNPVSLVVTRLVILGSGEEGPQVGPSAAQTLRSFCAWQRGLNTPEDSDPDHFDTAILFTRQDLCGVSTCDTLGMADVGTVCDPARSCAIVEDDGLQSAFTAAHELGHVFNMLHDNSKPCISLNGPLSTSRHVMAPVMAHVDPEEPWSPCSARFITDFLDNGYGHCLLDKPEAPLHLPVTFPGKDYDADRQCQLTFGPDSRHCPQLPPPCAALWCSGHLNGHAMCQTKHSPWADGTPCGPAQACMGGRCLHMDQLQDFNIPQAGGWGPWGPWGDCSRTCGGGVQFSSRDCTRPVPRNGGKYCEGRRTRFRSCNTEDCPTGSALTFREEQCAAYNHRTDLFKSFPGPMDWVPRYTGVAPQDQCKLTCQAQALGYYYVLEPRVVDGTPCSPDSSSVCVQGRCIHAGCDRIIGSKKKFDKCMVCGGDGSGCSKQSGSFRKFRYGYNNVVTIPAGATHILVRQQGNPGHRSIYLALKLPDGSYALNGEYTLMPSPTDVVLPGAVSLRYSGATAASETLSGHGPLAQPLTLQVLVAGNPQDTRLRYSFFVPRPTPSTPRPTPQDWLHRRAQILEILRRRPWAGRK.

The signal sequence occupies residues 1 to 51 (MSQTGSHPGRGLAGRWLWGAQPCLLLPIVPLSWLVWLLLLLLASLLPSARL). Positions 52–212 (ASPLPREEEI…PSPRPRRAKR (161 aa)) are excised as a propeptide. N68 carries N-linked (GlcNAc...) asparagine glycosylation. Residues 192 to 199 (PMCNVKAP) carry the Cysteine switch motif. C194 contacts Zn(2+). In terms of domain architecture, Peptidase M12B spans 218-428 (RFVETLVVAD…GYGHCLLDKP (211 aa)). 11 disulfides stabilise this stretch: C293-C345, C322-C327, C339-C423, C377-C407, C449-C472, C460-C482, C467-C501, C495-C506, C532-C569, C536-C574, and C547-C559. Residue H361 participates in Zn(2+) binding. E362 is a catalytic residue. Zn(2+) is bound by residues H365 and H371. Positions 437–519 (TFPGKDYDAD…DQLQDFNIPQ (83 aa)) constitute a Disintegrin domain. Residues 520–575 (AGGWGPWGPWGDCSRTCGGGVQFSSRDCTRPVPRNGGKYCEGRRTRFRSCNTEDCP) enclose the TSP type-1 domain. Residues 686 to 837 (SKQSGSFRKF…LRRRPWAGRK (152 aa)) are spacer.

In terms of assembly, interacts with SRPX2. It depends on Zn(2+) as a cofactor. In terms of processing, the precursor is cleaved by a furin endopeptidase. Glycosylated. Can be O-fucosylated by POFUT2 on a serine or a threonine residue found within the consensus sequence C1-X(2)-(S/T)-C2-G of the TSP type-1 repeat domains where C1 and C2 are the first and second cysteine residue of the repeat, respectively. Fucosylated repeats can then be further glycosylated by the addition of a beta-1,3-glucose residue by the glucosyltransferase, B3GALTL. Fucosylation mediates the efficient secretion of ADAMTS family members. Can also be C-glycosylated with one or two mannose molecules on tryptophan residues within the consensus sequence W-X-X-W of the TPRs, and N-glycosylated. These other glycosylations can also facilitate secretion. In terms of tissue distribution, expressed in brain, lung and heart. Expressed at very low level in placenta and skeletal muscles. Isoform 2: Detected in osteoarthritic synovium.

The protein resides in the secreted. It localises to the extracellular space. It is found in the extracellular matrix. The catalysed reaction is Glutamyl endopeptidase. Bonds cleaved include 370-Thr-Glu-Gly-Glu-|-Ala-Arg-Gly-Ser-377 in the interglobular domain of mammalian aggrecan.. Its function is as follows. Cleaves aggrecan, a cartilage proteoglycan, at the '392-Glu-|-Ala-393' site and may be involved in its turnover. Also cleaves COMP. May play an important role in the destruction of aggrecan in arthritic diseases. Could be a critical factor in the exacerbation of neurodegeneration in Alzheimer disease. This is A disintegrin and metalloproteinase with thrombospondin motifs 4 (ADAMTS4) from Homo sapiens (Human).